Consider the following 343-residue polypeptide: N-acetyl-gamma-glutamyl-phosphate reductase (343 aa).

Residue C147 is part of the active site.

The protein belongs to the NAGSA dehydrogenase family. Type 1 subfamily.

Its subcellular location is the cytoplasm. The enzyme catalyses N-acetyl-L-glutamate 5-semialdehyde + phosphate + NADP(+) = N-acetyl-L-glutamyl 5-phosphate + NADPH + H(+). It participates in amino-acid biosynthesis; L-arginine biosynthesis; N(2)-acetyl-L-ornithine from L-glutamate: step 3/4. Catalyzes the NADPH-dependent reduction of N-acetyl-5-glutamyl phosphate to yield N-acetyl-L-glutamate 5-semialdehyde. The polypeptide is N-acetyl-gamma-glutamyl-phosphate reductase (Staphylococcus aureus (strain MRSA252)).